A 200-amino-acid polypeptide reads, in one-letter code: ATP-dependent Clp protease proteolytic subunit 2 (200 aa).

Catalysis depends on serine 99, which acts as the Nucleophile. Residue histidine 123 is part of the active site.

It belongs to the peptidase S14 family. As to quaternary structure, fourteen ClpP subunits assemble into 2 heptameric rings which stack back to back to give a disk-like structure with a central cavity, resembling the structure of eukaryotic proteasomes.

It localises to the cytoplasm. The enzyme catalyses Hydrolysis of proteins to small peptides in the presence of ATP and magnesium. alpha-casein is the usual test substrate. In the absence of ATP, only oligopeptides shorter than five residues are hydrolyzed (such as succinyl-Leu-Tyr-|-NHMec, and Leu-Tyr-Leu-|-Tyr-Trp, in which cleavage of the -Tyr-|-Leu- and -Tyr-|-Trp bonds also occurs).. In terms of biological role, cleaves peptides in various proteins in a process that requires ATP hydrolysis. Has a chymotrypsin-like activity. Plays a major role in the degradation of misfolded proteins. The chain is ATP-dependent Clp protease proteolytic subunit 2 from Symbiobacterium thermophilum (strain DSM 24528 / JCM 14929 / IAM 14863 / T).